The sequence spans 120 residues: MVHMHITAWALGLILFFVAYSLYSAGRKGKGVHMGLRLMYIIIIVTGVWLYLDQTIVDKSYHMWYGLKMLAGILVIAGMEMVLVKMSKNKATGAFWGLFIIALVAVFYLGLKLPIGWQVF.

4 helical membrane-spanning segments follow: residues 6 to 26 (ITAW…YSAG), 32 to 52 (VHMG…WLYL), 64 to 84 (WYGL…MVLV), and 91 to 111 (ATGA…YLGL).

The protein belongs to the UPF0344 family.

It is found in the cell membrane. The protein is UPF0344 protein BCAH187_A1308 of Bacillus cereus (strain AH187).